The following is a 59-amino-acid chain: Large ribosomal subunit protein uL30 (59 aa).

The protein belongs to the universal ribosomal protein uL30 family. As to quaternary structure, part of the 50S ribosomal subunit.

In Alteromonas mediterranea (strain DSM 17117 / CIP 110805 / LMG 28347 / Deep ecotype), this protein is Large ribosomal subunit protein uL30.